A 319-amino-acid chain; its full sequence is Ribosomal RNA small subunit methyltransferase H (319 aa).

S-adenosyl-L-methionine contacts are provided by residues 52–54 (GGH), D70, F100, D126, and Q133. The tract at residues 289–319 (PKPLSPSELERQRNPRARSAKLRVAARSSQM) is disordered.

It belongs to the methyltransferase superfamily. RsmH family.

The protein localises to the cytoplasm. It catalyses the reaction cytidine(1402) in 16S rRNA + S-adenosyl-L-methionine = N(4)-methylcytidine(1402) in 16S rRNA + S-adenosyl-L-homocysteine + H(+). Functionally, specifically methylates the N4 position of cytidine in position 1402 (C1402) of 16S rRNA. The sequence is that of Ribosomal RNA small subunit methyltransferase H from Synechococcus sp. (strain JA-2-3B'a(2-13)) (Cyanobacteria bacterium Yellowstone B-Prime).